The primary structure comprises 271 residues: Formamidopyrimidine-DNA glycosylase (271 aa).

Residue P2 is the Schiff-base intermediate with DNA of the active site. Residue E3 is the Proton donor of the active site. Residue K58 is the Proton donor; for beta-elimination activity of the active site. DNA is bound by residues H91, R110, and R152. The FPG-type zinc-finger motif lies at 237 to 271 (SIYGKKGRPCPKCGSAIRMMRLGGRSTFFCPLCQK). Residue R261 is the Proton donor; for delta-elimination activity of the active site.

Belongs to the FPG family. Monomer. Zn(2+) serves as cofactor.

The catalysed reaction is Hydrolysis of DNA containing ring-opened 7-methylguanine residues, releasing 2,6-diamino-4-hydroxy-5-(N-methyl)formamidopyrimidine.. It catalyses the reaction 2'-deoxyribonucleotide-(2'-deoxyribose 5'-phosphate)-2'-deoxyribonucleotide-DNA = a 3'-end 2'-deoxyribonucleotide-(2,3-dehydro-2,3-deoxyribose 5'-phosphate)-DNA + a 5'-end 5'-phospho-2'-deoxyribonucleoside-DNA + H(+). Functionally, involved in base excision repair of DNA damaged by oxidation or by mutagenic agents. Acts as a DNA glycosylase that recognizes and removes damaged bases. Has a preference for oxidized purines, such as 7,8-dihydro-8-oxoguanine (8-oxoG). Has AP (apurinic/apyrimidinic) lyase activity and introduces nicks in the DNA strand. Cleaves the DNA backbone by beta-delta elimination to generate a single-strand break at the site of the removed base with both 3'- and 5'-phosphates. This chain is Formamidopyrimidine-DNA glycosylase, found in Geotalea daltonii (strain DSM 22248 / JCM 15807 / FRC-32) (Geobacter daltonii).